The primary structure comprises 299 residues: Lipoyl synthase 2 (299 aa).

Residues Cys-43, Cys-48, Cys-54, Cys-69, Cys-73, Cys-76, and Ser-294 each contribute to the [4Fe-4S] cluster site. One can recognise a Radical SAM core domain in the interval 55 to 283; it reads YAAGTATFLL…GAVARDLGFA (229 aa).

Belongs to the radical SAM superfamily. Lipoyl synthase family. [4Fe-4S] cluster is required as a cofactor.

Its subcellular location is the cytoplasm. The enzyme catalyses [[Fe-S] cluster scaffold protein carrying a second [4Fe-4S](2+) cluster] + N(6)-octanoyl-L-lysyl-[protein] + 2 oxidized [2Fe-2S]-[ferredoxin] + 2 S-adenosyl-L-methionine + 4 H(+) = [[Fe-S] cluster scaffold protein] + N(6)-[(R)-dihydrolipoyl]-L-lysyl-[protein] + 4 Fe(3+) + 2 hydrogen sulfide + 2 5'-deoxyadenosine + 2 L-methionine + 2 reduced [2Fe-2S]-[ferredoxin]. It functions in the pathway protein modification; protein lipoylation via endogenous pathway; protein N(6)-(lipoyl)lysine from octanoyl-[acyl-carrier-protein]: step 2/2. In terms of biological role, catalyzes the radical-mediated insertion of two sulfur atoms into the C-6 and C-8 positions of the octanoyl moiety bound to the lipoyl domains of lipoate-dependent enzymes, thereby converting the octanoylated domains into lipoylated derivatives. The polypeptide is Lipoyl synthase 2 (Parasynechococcus marenigrum (strain WH8102)).